Consider the following 72-residue polypeptide: Probable movement protein p8 (72 aa).

Residues 16 to 58 (GRARSVEGKKHNGSGLTGVKRHAVSETSQKSQQGTGNGTMTNI) form a disordered region. Positions 40–58 (SETSQKSQQGTGNGTMTNI) are enriched in polar residues.

Belongs to the carmovirus/necrovirus/panicovirus movement protein p8 family.

Cell-to-cell movement. The protein is Probable movement protein p8 of Tobacco necrosis virus (strain A) (TNV-A).